Reading from the N-terminus, the 322-residue chain is HPr kinase/phosphorylase (322 aa).

Catalysis depends on residues histidine 146 and lysine 167. 161 to 168 (GDSGLGKS) lines the ATP pocket. Serine 168 lines the Mg(2+) pocket. Aspartate 185 acts as the Proton acceptor; for phosphorylation activity. Proton donor; for dephosphorylation activity in catalysis. The interval 209–218 (LEVRGLGLLD) is important for the catalytic mechanism of both phosphorylation and dephosphorylation. Mg(2+) is bound at residue glutamate 210. Arginine 250 is a catalytic residue. Residues 271 to 276 (QVAAGR) form an important for the catalytic mechanism of dephosphorylation region.

The protein belongs to the HPrK/P family. As to quaternary structure, homohexamer. The cofactor is Mg(2+).

It catalyses the reaction [HPr protein]-L-serine + ATP = [HPr protein]-O-phospho-L-serine + ADP + H(+). It carries out the reaction [HPr protein]-O-phospho-L-serine + phosphate + H(+) = [HPr protein]-L-serine + diphosphate. Functionally, catalyzes the ATP- as well as the pyrophosphate-dependent phosphorylation of a specific serine residue in HPr, a phosphocarrier protein of the phosphoenolpyruvate-dependent sugar phosphotransferase system (PTS). HprK/P also catalyzes the pyrophosphate-producing, inorganic phosphate-dependent dephosphorylation (phosphorolysis) of seryl-phosphorylated HPr (P-Ser-HPr). This chain is HPr kinase/phosphorylase, found in Burkholderia lata (strain ATCC 17760 / DSM 23089 / LMG 22485 / NCIMB 9086 / R18194 / 383).